Consider the following 319-residue polypeptide: MAAAAASNGSGMEVDVAAFPTVMAQGVTGSVTVALHPLVILNISDHWIRMRSQEGRPVQVIGALIGKQEGRNIEVMNSFELLSQINEEKITINKEYYYTKEEQFKQVFKDMEFLGWYTTGGTPDPSDIHVHKQVCEIIESPLFLKLNPMTKHTDLPVSVYESVIDIVNGEATMLLAELSYTLATEEAERIGVDHVARMTATGSGENSTVAEHLIAQHSAIKMLHSRVRLILEYVRAAEAGEVPFNHEILREASALCHCLPVLSTDKFKMDFYDQCNDVGLMSYLGTITKTCNTMNQFVNKFNILYDRQGIGRRMRGLFF.

An MPN domain is found at 33–166; that stretch reads VALHPLVILN…VSVYESVIDI (134 aa).

This sequence belongs to the peptidase M67A family. CSN6 subfamily. In terms of assembly, component of the CSN complex, probably composed of cops1, cops2, cops3, cops4, cops5, cops6, cops7, cops8 and cops9.

The protein resides in the cytoplasm. It localises to the nucleus. Component of the COP9 signalosome complex (CSN), a complex involved in various cellular and developmental processes. The CSN complex is an essential regulator of the ubiquitin (Ubl) conjugation pathway by mediating the deneddylation of the cullin subunits of E3 ligase complexes, leading to modify the Ubl ligase activity. This chain is COP9 signalosome complex subunit 6 (cops6), found in Xenopus tropicalis (Western clawed frog).